Consider the following 225-residue polypeptide: Jeltraxin (225 aa).

Positions M1–A19 are cleaved as a signal peptide. The 203-residue stretch at G21–P223 folds into the Pentraxin (PTX) domain. A disulfide bridge connects residues C51 and C112. Positions 75 and 76 each coordinate Ca(2+). N87 carries N-linked (GlcNAc...) asparagine glycosylation. Ca(2+)-binding residues include E153, Q154, D155, and Q165. N-linked (GlcNAc...) asparagine glycosylation occurs at N207.

As to quaternary structure, homodecamer consisting of two homopentamer units. Pentraxin (or pentaxin) have a discoid arrangement of 5 non-covalently bound subunits. The cofactor is Ca(2+). Post-translationally, glycosylated. As to expression, oviduct. Highest expression levels were detected in the pars convoluta with lower levels detected in the pars recta. No expression was detected in the pars uterina.

It is found in the secreted. Its function is as follows. Calcium-dependent beta-galactose specific lectin. The sequence is that of Jeltraxin from Lepidobatrachus laevis (Budgett's frog).